The following is a 216-amino-acid chain: Imidazole glycerol phosphate synthase subunit HisH (216 aa).

Residues 2-216 (RVAIIDYGSG…LIANFLKWKP (215 aa)) form the Glutamine amidotransferase type-1 domain. C88 acts as the Nucleophile in catalysis. Catalysis depends on residues H196 and E198.

As to quaternary structure, heterodimer of HisH and HisF.

Its subcellular location is the cytoplasm. The catalysed reaction is 5-[(5-phospho-1-deoxy-D-ribulos-1-ylimino)methylamino]-1-(5-phospho-beta-D-ribosyl)imidazole-4-carboxamide + L-glutamine = D-erythro-1-(imidazol-4-yl)glycerol 3-phosphate + 5-amino-1-(5-phospho-beta-D-ribosyl)imidazole-4-carboxamide + L-glutamate + H(+). The enzyme catalyses L-glutamine + H2O = L-glutamate + NH4(+). The protein operates within amino-acid biosynthesis; L-histidine biosynthesis; L-histidine from 5-phospho-alpha-D-ribose 1-diphosphate: step 5/9. IGPS catalyzes the conversion of PRFAR and glutamine to IGP, AICAR and glutamate. The HisH subunit catalyzes the hydrolysis of glutamine to glutamate and ammonia as part of the synthesis of IGP and AICAR. The resulting ammonia molecule is channeled to the active site of HisF. The polypeptide is Imidazole glycerol phosphate synthase subunit HisH (Brucella suis biovar 1 (strain 1330)).